Reading from the N-terminus, the 616-residue chain is Chaperone protein HscA (616 aa).

This sequence belongs to the heat shock protein 70 family.

Its function is as follows. Chaperone involved in the maturation of iron-sulfur cluster-containing proteins. Has a low intrinsic ATPase activity which is markedly stimulated by HscB. Involved in the maturation of IscU. In Escherichia fergusonii (strain ATCC 35469 / DSM 13698 / CCUG 18766 / IAM 14443 / JCM 21226 / LMG 7866 / NBRC 102419 / NCTC 12128 / CDC 0568-73), this protein is Chaperone protein HscA.